Reading from the N-terminus, the 137-residue chain is Small ribosomal subunit protein uS12 (137 aa).

The segment at 1–23 (MPTINQLVRKPRKSNATKSKSPA) is disordered. Asp-102 is subject to 3-methylthioaspartic acid.

Belongs to the universal ribosomal protein uS12 family. Part of the 30S ribosomal subunit. Contacts proteins S8 and S17. May interact with IF1 in the 30S initiation complex.

Its function is as follows. With S4 and S5 plays an important role in translational accuracy. Interacts with and stabilizes bases of the 16S rRNA that are involved in tRNA selection in the A site and with the mRNA backbone. Located at the interface of the 30S and 50S subunits, it traverses the body of the 30S subunit contacting proteins on the other side and probably holding the rRNA structure together. The combined cluster of proteins S8, S12 and S17 appears to hold together the shoulder and platform of the 30S subunit. This is Small ribosomal subunit protein uS12 from Leuconostoc citreum (strain KM20).